The sequence spans 206 residues: Sclerostin domain-containing protein 1 (206 aa).

The signal sequence occupies residues 1-23 (MLPPAIHFYLLPLACILMKSCLA). Asparagine 47 carries N-linked (GlcNAc...) asparagine glycosylation. Intrachain disulfides connect cysteine 75/cysteine 133, cysteine 89/cysteine 147, cysteine 100/cysteine 163, and cysteine 104/cysteine 165. The region spanning 75 to 170 (CRELRSTKYI…TACKCKRYTR (96 aa)) is the CTCK domain. Asparagine 173 carries N-linked (GlcNAc...) asparagine glycosylation. Positions 174–206 (ESSHNFESMSPAKPVQHHRERKRASKSSKHSMS) are disordered. Positions 188–206 (VQHHRERKRASKSSKHSMS) are enriched in basic residues.

It belongs to the sclerostin family. In terms of assembly, interacts with BMP2, BMP4, BMP6 and BMP7 with high affinity. As to expression, highly expressed in kidney and weakly in lung.

The protein localises to the secreted. May be involved in the onset of endometrial receptivity for implantation/sensitization for the decidual cell reaction Enhances Wnt signaling and inhibits TGF-beta signaling. Directly antagonizes activity of BMP2, BMP4, BMP6 and BMP7 in a dose-dependent manner. This is Sclerostin domain-containing protein 1 (SOSTDC1) from Homo sapiens (Human).